Reading from the N-terminus, the 433-residue chain is tRNA-2-methylthio-N(6)-dimethylallyladenosine synthase (433 aa).

The MTTase N-terminal domain occupies 4–119 (KKLFIQTLGC…ITQAIKTPKF (116 aa)). 6 residues coordinate [4Fe-4S] cluster: Cys-13, Cys-50, Cys-82, Cys-151, Cys-155, and Cys-158. One can recognise a Radical SAM core domain in the interval 137–370 (RNSIYKSYIN…QNRHSEILDE (234 aa)). The TRAM domain maps to 373 to 433 (KKQENKTFKV…KRMVLYGEIV (61 aa)).

The protein belongs to the methylthiotransferase family. MiaB subfamily. As to quaternary structure, monomer. [4Fe-4S] cluster serves as cofactor.

It localises to the cytoplasm. The enzyme catalyses N(6)-dimethylallyladenosine(37) in tRNA + (sulfur carrier)-SH + AH2 + 2 S-adenosyl-L-methionine = 2-methylsulfanyl-N(6)-dimethylallyladenosine(37) in tRNA + (sulfur carrier)-H + 5'-deoxyadenosine + L-methionine + A + S-adenosyl-L-homocysteine + 2 H(+). Its function is as follows. Catalyzes the methylthiolation of N6-(dimethylallyl)adenosine (i(6)A), leading to the formation of 2-methylthio-N6-(dimethylallyl)adenosine (ms(2)i(6)A) at position 37 in tRNAs that read codons beginning with uridine. The sequence is that of tRNA-2-methylthio-N(6)-dimethylallyladenosine synthase from Campylobacter jejuni (strain RM1221).